A 196-amino-acid chain; its full sequence is Zinc finger C2H2 protein ECU03_0940 (196 aa).

2 C2H2-type zinc fingers span residues 130 to 155 (YACE…KEGH) and 166 to 191 (YVCP…KHYH).

This Encephalitozoon cuniculi (strain GB-M1) (Microsporidian parasite) protein is Zinc finger C2H2 protein ECU03_0940.